The primary structure comprises 198 residues: FMN-dependent NADH:quinone oxidoreductase (198 aa).

FMN-binding positions include serine 10, 16–18, 94–97, and 138–141; these read SQS, MYNF, and TRGG.

The protein belongs to the azoreductase type 1 family. Homodimer. It depends on FMN as a cofactor.

It catalyses the reaction 2 a quinone + NADH + H(+) = 2 a 1,4-benzosemiquinone + NAD(+). The catalysed reaction is N,N-dimethyl-1,4-phenylenediamine + anthranilate + 2 NAD(+) = 2-(4-dimethylaminophenyl)diazenylbenzoate + 2 NADH + 2 H(+). Its function is as follows. Quinone reductase that provides resistance to thiol-specific stress caused by electrophilic quinones. Also exhibits azoreductase activity. Catalyzes the reductive cleavage of the azo bond in aromatic azo compounds to the corresponding amines. This Shewanella baltica (strain OS223) protein is FMN-dependent NADH:quinone oxidoreductase.